A 77-amino-acid chain; its full sequence is ATP synthase subunit 9, mitochondrial (77 aa).

2 consecutive transmembrane segments (helical) span residues 8–28 and 45–72; these read MGAGAATNASAGAAIGIGNVL and LFGYAILGFALTEANASFAPMMAFLISF.

Belongs to the ATPase C chain family. As to quaternary structure, F-type ATPases have 2 components, CF(1) - the catalytic core - and CF(0) - the membrane proton channel. CF(1) has five subunits: alpha(3), beta(3), gamma(1), delta(1), epsilon(1). CF(0) has three main subunits: a, b and c.

The protein resides in the mitochondrion membrane. Its function is as follows. This protein is one of the chains of the nonenzymatic membrane component (F0) of mitochondrial ATPase. This Petunia sp. (Petunia) protein is ATP synthase subunit 9, mitochondrial (ATP9).